A 193-amino-acid polypeptide reads, in one-letter code: MNAIPYVVEQTKLGERSYDIYSRLLKDRIIIIGSEINDQVASSVVAQLLFLEAEDAEKDIFLYINSPGGSTXAGFAILDXMNLIXPEVQTLCMGLAASFGALLLLAGAKGKRFALPNSEIMIHQPLGGVKGQATEIEITAKRILKLKHDINKIIADRTGQPIEKIAHDTERDYFMTAEEAKEYGIVDGVVEKK.

The active-site Nucleophile is Ser-98. His-123 is a catalytic residue.

Belongs to the peptidase S14 family. As to quaternary structure, fourteen ClpP subunits assemble into 2 heptameric rings which stack back to back to give a disk-like structure with a central cavity, resembling the structure of eukaryotic proteasomes.

The protein localises to the cytoplasm. It catalyses the reaction Hydrolysis of proteins to small peptides in the presence of ATP and magnesium. alpha-casein is the usual test substrate. In the absence of ATP, only oligopeptides shorter than five residues are hydrolyzed (such as succinyl-Leu-Tyr-|-NHMec, and Leu-Tyr-Leu-|-Tyr-Trp, in which cleavage of the -Tyr-|-Leu- and -Tyr-|-Trp bonds also occurs).. Cleaves peptides in various proteins in a process that requires ATP hydrolysis. Has a chymotrypsin-like activity. Plays a major role in the degradation of misfolded proteins. The polypeptide is ATP-dependent Clp protease proteolytic subunit 1 (Bacillus cereus (strain ATCC 10987 / NRS 248)).